The primary structure comprises 260 residues: GDSL esterase/lipase WDL1 (260 aa).

An N-terminal signal peptide occupies residues 1–35; it reads MLGFAPAPGRPLFVLFGSSIVQFSFSNGGWGAALA. Residue Ser-18 is the Nucleophile of the active site. Residues Asn-83 and Asn-150 are each glycosylated (N-linked (GlcNAc...) asparagine). Catalysis depends on residues Asp-191 and His-194.

This sequence belongs to the 'GDSL' lipolytic enzyme family. In terms of tissue distribution, highly expressed in panicles. Expressed in shoots, mature flowers and seeds.

It is found in the endoplasmic reticulum. Its function is as follows. Involved in the organization of leaf cuticle and wax crystals. This is GDSL esterase/lipase WDL1 from Oryza sativa subsp. japonica (Rice).